The chain runs to 169 residues: Putative phosphoesterase SERP0604 (169 aa).

The active-site Proton donor is His34. 2 short sequence motifs (HXTX) span residues 34-37 (HITI) and 115-118 (HFTI). His115 functions as the Proton acceptor in the catalytic mechanism.

This sequence belongs to the 2H phosphoesterase superfamily. YjcG family.

This chain is Putative phosphoesterase SERP0604, found in Staphylococcus epidermidis (strain ATCC 35984 / DSM 28319 / BCRC 17069 / CCUG 31568 / BM 3577 / RP62A).